The primary structure comprises 450 residues: MGKYFGTDGVRGVANSELTPELAFRLGRMGGYVLTRHVGEHPRVLVARDTRISGEMLESALIAGLVSVGIEVMRLGVISTPGVAYLTKAQGASASVMISASHNPVDDNGIKFFGSDGFKLSDDQEEEIEQLLDTAEDTLPRPSGEGLGTVSDYFEGKQKYIQYLKQTIENDFNGYHIALDCANGATSGLATHLFADLDAEISSMGASPNGLNINDGVGSTHPEALAAFVLDKKADVGLAFDGDGDRVIAIDEIGQIVDGDKIMFICAKYLREQGLLNSNTIVSTVMSNLGFYKGLRELEIEDVQTAVGDRYVVEAMREGNYNLGGEQSGHIIFLDHNTTGDGLLSGIQLINVMKATGKKLSELASEMKTFPQKLENIRVSDKNHVTDNPKVSKVISEVEAEMAGNGRVLVRPSGTEPLVRVMVEAATKEETDEYCERISAVVRSEMALND.

The active-site Phosphoserine intermediate is serine 101. Mg(2+) is bound by residues serine 101, aspartate 241, aspartate 243, and aspartate 245. Phosphoserine is present on serine 101.

Belongs to the phosphohexose mutase family. It depends on Mg(2+) as a cofactor. Post-translationally, activated by phosphorylation.

It carries out the reaction alpha-D-glucosamine 1-phosphate = D-glucosamine 6-phosphate. Catalyzes the conversion of glucosamine-6-phosphate to glucosamine-1-phosphate. This Listeria welshimeri serovar 6b (strain ATCC 35897 / DSM 20650 / CCUG 15529 / CIP 8149 / NCTC 11857 / SLCC 5334 / V8) protein is Phosphoglucosamine mutase.